The primary structure comprises 414 residues: COUP transcription factor 2 (414 aa).

The interval 1 to 72 is disordered; the sequence is MAMVVSTWRD…PGGPGSDKQQ (72 aa). Over residues 27-37 the composition is skewed to pro residues; sequence PPVPGPPPGAP. Residues 38 to 57 show a composition bias toward low complexity; the sequence is HTPQTPGQGGPASTPAQTAA. Position 51 is a phosphothreonine (T51). The span at 58–67 shows a compositional bias: gly residues; the sequence is GGQGGPGGPG. The nuclear receptor DNA-binding region spans 76-151; the sequence is HIECVVCGDK…VGMRREAVQR (76 aa). 2 NR C4-type zinc fingers span residues 79 to 99 and 115 to 139; these read CVVC…CEGC and CRAN…LKKC. Residues 117–414 are interaction with ZFPM2; the sequence is ANRNCPIDQH…SFNWPYMAIQ (298 aa). The 227-residue stretch at 177 to 403 folds into the NR LBD domain; sequence YLSGYISLLL…TLIRDMLLSG (227 aa). Residues 337-414 form an important for dimerization region; that stretch reads LQEKSQCALE…SFNWPYMAIQ (78 aa).

Belongs to the nuclear hormone receptor family. NR2 subfamily. As to quaternary structure, interacts with SQSTM1. Binds DNA as a dimer; homodimer or heterodimer with NR2F6. Interacts with NCOA1, NCOA2, NCOA3 and PPARGC1A. Interacts with ZFPM2. As to expression, ubiquitous. Expressed in the stromal cells of developing fetal ovaries.

The protein localises to the nucleus. Functionally, ligand-activated transcription factor. Activated by high concentrations of 9-cis-retinoic acid and all-trans-retinoic acid, but not by dexamethasone, cortisol or progesterone (in vitro). Regulation of the apolipoprotein A-I gene transcription. Binds to DNA site A. May be required to establish ovary identity during early gonad development. This Homo sapiens (Human) protein is COUP transcription factor 2 (NR2F2).